The primary structure comprises 691 residues: Elongation factor G (691 aa).

The region spanning 8–282 (ERVRNIGIAA…AVVNYLPAPV (275 aa)) is the tr-type G domain. Residues 17–24 (AHIDAGKT), 81–85 (DTPGH), and 135–138 (NKMD) contribute to the GTP site.

Belongs to the TRAFAC class translation factor GTPase superfamily. Classic translation factor GTPase family. EF-G/EF-2 subfamily.

It is found in the cytoplasm. In terms of biological role, catalyzes the GTP-dependent ribosomal translocation step during translation elongation. During this step, the ribosome changes from the pre-translocational (PRE) to the post-translocational (POST) state as the newly formed A-site-bound peptidyl-tRNA and P-site-bound deacylated tRNA move to the P and E sites, respectively. Catalyzes the coordinated movement of the two tRNA molecules, the mRNA and conformational changes in the ribosome. The chain is Elongation factor G from Prochlorococcus marinus (strain NATL1A).